Consider the following 298-residue polypeptide: MSSAAMSKYVNDMWPGSPQEKASPSTSGSGRSSRLSSRSRSRSSSRSSRRDSRSSSRSSSRSHSRPRRSRRSRSRSRRRHQRKYRRYSRSYSRSRSRSRSHRYHRDSRYERPRRYYKSPSPYRSRSRSRSRGRSQHRWSYYAITRGRRYYGFGRTVYPEDRPRWRERSRTRSRSRSRTPFRLSEKDRMELLEIAKANAAKALGTANFDLPASLRAKEASQGTAVSSSGPKVEHSEKQTEDATKNTSEKSSTQRNIAFSSNNSVAKPLQKTTKAAVEEKSSGSPKIDKKKSPYGLWIPV.

Residues 1–135 (MSSAAMSKYV…SRSRSRGRSQ (135 aa)) are disordered. Position 17 is a phosphoserine (S17). Positions 23-36 (SPSTSGSGRSSRLS) are enriched in low complexity. Positions 60–105 (SRSHSRPRRSRRSRSRSRRRHQRKYRRYSRSYSRSRSRSRSHRYHR) are enriched in basic residues. A phosphoserine mark is found at S118 and S120. Residues 124 to 135 (SRSRSRSRGRSQ) show a composition bias toward basic residues. R145 is modified (omega-N-methylarginine). 2 disordered regions span residues 161–181 (RPRW…TPFR) and 218–298 (ASQG…WIPV). The segment covering 219-228 (SQGTAVSSSG) has biased composition (polar residues). The segment covering 230-246 (KVEHSEKQTEDATKNTS) has biased composition (basic and acidic residues). Over residues 247 to 271 (EKSSTQRNIAFSSNNSVAKPLQKTT) the composition is skewed to polar residues. Basic and acidic residues predominate over residues 274–289 (AVEEKSSGSPKIDKKK). S282 carries the post-translational modification Phosphoserine.

It belongs to the RSRP family. Phosphorylated. Phosphorylation at Ser-118 and Ser-120 mediates the interaction with spliceosome proteins.

It is found in the nucleus. In terms of biological role, probably acts as a spliceosomal factor that contributes to spliceosome assembly and regulates the isoform switching of proteins such as PARP6. In Mus musculus (Mouse), this protein is Arginine/serine-rich protein 1 (Rsrp1).